A 311-amino-acid polypeptide reads, in one-letter code: p-hydroxybenzoic acid efflux pump subunit AaeA (311 aa).

A helical membrane pass occupies residues Val11–Phe31.

It belongs to the membrane fusion protein (MFP) (TC 8.A.1) family.

It localises to the cell inner membrane. In terms of biological role, forms an efflux pump with AaeB. The protein is p-hydroxybenzoic acid efflux pump subunit AaeA of Yersinia pestis bv. Antiqua (strain Antiqua).